Here is a 104-residue protein sequence, read N- to C-terminus: Ig kappa chain b5 variant C region (104 aa).

One can recognise an Ig-like domain in the interval 5 to 100 (PTVLIFPPSP…SGSPVVQSFS (96 aa)). A disulfide bond links C26 and C85.

The chain is Ig kappa chain b5 variant C region from Oryctolagus cuniculus (Rabbit).